The following is a 695-amino-acid chain: Calcium-binding acidic-repeat protein (695 aa).

A signal peptide (or 23) is located at residues 1 to 20; it reads MSHLWCWLFLVLCLACLVLS. 6 TSP type-3 repeats span residues 24 to 38, 47 to 56, 70 to 82, 184 to 196, 202 to 214, and 248 to 260; these read KDSDGDGLLDVDEIN, ADSDQDGLTD, KDTDDDSIGDGVE, GDSDDDGVSDGAE, KDSDGDGLTDEEE, and GDSDDDGLGDGAE. Residues 45-695 are disordered; sequence YNADSDQDGL…TDPWRSDHSV (651 aa). Basic and acidic residues predominate over residues 59 to 70; it reads EVNRHQTHPQDK. 3 stretches are compositionally biased toward acidic residues: residues 271 to 283, 291 to 306, and 313 to 324; these read ADSDNDGLDDGEE, PEDPDSDNDGLNDGDE, and DPEEDDSDEDGV. 15 TSP type-3 repeats span residues 294–308, 317–329, 340–352, 363–375, 379–393, 402–414, 425–437, 470–482, 493–505, 516–528, 539–551, 555–569, 600–609, 623–635, and 646–658; these read PDSDNDGLNDGDEVN, DDSDEDGVCDGAE, EDSDNDGIPDGAE, EDSDDDGIADGAE, TDSDGDGLPDEDEVA, ADSDYDGLTDGAE, KDTDDDGLGDGVE, EDTDDDGLTDGAE, ADTDDDGLTDGAE, ADSDGDGLSDGAE, GDSDDDGVPDAAE, KDSDGDGLSDTDEVR, RDTDGDGVAD, and ADSDDDGLSDGAE. Composition is skewed to acidic residues over residues 361-370 and 381-392; these read NDEDSDDDGI and SDGDGLPDEDEV. Acidic residues-rich tracts occupy residues 467 to 477 and 491 to 500; these read PNDEDTDDDGL and EDADTDDDGL. Positions 537 to 546 are enriched in acidic residues; it reads NDGDSDDDGV. Positions 589 to 603 are enriched in basic and acidic residues; it reads EILKHKTDPRNRDTD. Positions 665–679 are enriched in basic and acidic residues; sequence NAKDGDSDDDGKADG.

The protein resides in the secreted. Its subcellular location is the endoplasmic reticulum. Its function is as follows. May function as a calcium-binding protein. In Euglena gracilis, this protein is Calcium-binding acidic-repeat protein.